The primary structure comprises 315 residues: MNEIRTKVQIVDIDEDMAGQRIDNFLRNQLKDVPKSMIYRIVRKGEVRVNKKRVKAEYKLAAGDVVRIPPVTLEKKDPETAPSTKLNKVAELQDLIIYEDDHLLVLNKPSGTAVHGGSGLKFGAIEALRALRPEARFLELVHRIDRDTSGILLVAKKRSALRHLQAQFREKTVQKYYFALVMGEWKNSCKVVNAPLLKNEVNSIVRVNPNGKPSETRFKVIEKFPQATLVQASPITGRTHQIRVHTQYSGHPIAWDDRYGDRRFDAYTAQHGLNRLFLHAANIRFTHPATEQPMEINAPMGEQLEKVVQSLRTSR.

The 74-residue stretch at 20 to 93 (QRIDNFLRNQ…TKLNKVAELQ (74 aa)) folds into the S4 RNA-binding domain. Residue Asp145 is part of the active site.

The protein belongs to the pseudouridine synthase RluA family.

It catalyses the reaction uridine(955/2504/2580) in 23S rRNA = pseudouridine(955/2504/2580) in 23S rRNA. Functionally, responsible for synthesis of pseudouridine from uracil at positions 955, 2504 and 2580 in 23S ribosomal RNA. This is Ribosomal large subunit pseudouridine synthase C (rluC) from Vibrio vulnificus (strain CMCP6).